The sequence spans 1621 residues: Cilia- and flagella-associated protein 43 (1621 aa).

WD repeat units lie at residues 97–138, 141–180, 293–330, 334–373, 377–417, 464–503, 634–673, and 679–721; these read GAQL…PLCS, DSQTTYTTLTFNPMNWHQLCLSSERSLTVWNIEICDNQYQ, LLEGNIKTMAFHKEGLYVAGNDGVLHLFTIKGSEVKLE, NAQEPIDSISFSPSYKTLSITTSKGSLYLYNQRNPEETYK, VYSR…SVSS, LYCVPVQHMHFDPRGNFLLTGAADRHIFILDARPSYSFQV, GSQLGPGVLCLSPHLKWMAVSGRDGIVYVKDLLNMETMAQ, and YHNG…SSRL. Coiled coils occupy residues 792–812, 850–870, 1026–1046, 1098–1118, 1150–1177, 1362–1389, 1451–1514, and 1591–1611; these read IKRKLEEAEKKETEKYAAEKE, TEEQERLYLDSEKEVARVRQE, CRQKEQEITRVMERNNRIQEI, VEEAKRLAAQEDNAKQRALDD, TEEEKKQFKEYEKKCKDLSEEKEKYSKE, DEKMRQDIENFMQELNVLRNEKMKFQLD, IFQL…QEKQ, and AKIQAQEIHELRSEVDRLRMK.

The protein belongs to the CFAP43 family.

It localises to the cytoplasm. The protein localises to the cytoskeleton. Its subcellular location is the cilium axoneme. In terms of biological role, involved in the regulation of the beating frequency of motile cilia in multiciliated cells of the larval epidermis. This chain is Cilia- and flagella-associated protein 43 (cfap43), found in Xenopus laevis (African clawed frog).